Here is a 59-residue protein sequence, read N- to C-terminus: UPF0434 protein Rsph17029_0141 (59 aa).

The protein belongs to the UPF0434 family.

This chain is UPF0434 protein Rsph17029_0141, found in Cereibacter sphaeroides (strain ATCC 17029 / ATH 2.4.9) (Rhodobacter sphaeroides).